The primary structure comprises 289 residues: Enoyl-CoA delta isomerase 1, mitochondrial (289 aa).

A mitochondrion-targeting transit peptide spans 1-28 (MALAAARRLLLHAGSRLGRREAVDGARR). Lys-48 is subject to N6-acetyllysine; alternate. Lys-48 carries the N6-succinyllysine; alternate modification. Lys-71 is subject to N6-succinyllysine. An N6-acetyllysine modification is found at Lys-76. Residues 93–97 (AGLDL), Gly-140, and Asn-164 contribute to the substrate site. Lys-222, Lys-229, Lys-255, and Lys-270 each carry N6-acetyllysine; alternate. N6-succinyllysine; alternate is present on residues Lys-222, Lys-229, Lys-255, and Lys-270. Residue Lys-275 is modified to N6-succinyllysine. Position 283 is an N6-acetyllysine; alternate (Lys-283). Position 283 is an N6-succinyllysine; alternate (Lys-283).

It belongs to the enoyl-CoA hydratase/isomerase family. Homotrimer.

The protein resides in the mitochondrion matrix. The enzyme catalyses a (3Z)-enoyl-CoA = a 4-saturated (2E)-enoyl-CoA. The catalysed reaction is a (3E)-enoyl-CoA = a 4-saturated (2E)-enoyl-CoA. It catalyses the reaction (3Z)-octenoyl-CoA = (2E)-octenoyl-CoA. It carries out the reaction (2E)-tetradecenoyl-CoA = (3Z)-tetradecenoyl-CoA. The enzyme catalyses (3Z)-dodecenoyl-CoA = (2E)-dodecenoyl-CoA. The catalysed reaction is (3Z)-hexenoyl-CoA = (2E)-hexenoyl-CoA. It catalyses the reaction (3Z)-decenoyl-CoA = (2E)-decenoyl-CoA. Its pathway is lipid metabolism; fatty acid beta-oxidation. In terms of biological role, key enzyme of fatty acid beta-oxidation. Able to isomerize both 3-cis (3Z) and 3-trans (3E) double bonds into the 2-trans (2E) form in a range of enoyl-CoA species, with a preference for (3Z)-enoyl-CoAs over (3E)-enoyl-CoAs. The catalytic efficiency of this enzyme is not affected by the fatty acyl chain length. The protein is Enoyl-CoA delta isomerase 1, mitochondrial of Mus musculus (Mouse).